A 192-amino-acid chain; its full sequence is Fe/S biogenesis protein NfuA (192 aa).

2 residues coordinate [4Fe-4S] cluster: Cys-150 and Cys-153.

The protein belongs to the NfuA family. As to quaternary structure, homodimer. It depends on [4Fe-4S] cluster as a cofactor.

In terms of biological role, involved in iron-sulfur cluster biogenesis. Binds a 4Fe-4S cluster, can transfer this cluster to apoproteins, and thereby intervenes in the maturation of Fe/S proteins. Could also act as a scaffold/chaperone for damaged Fe/S proteins. This chain is Fe/S biogenesis protein NfuA, found in Buchnera aphidicola subsp. Acyrthosiphon pisum (strain 5A).